A 486-amino-acid chain; its full sequence is Transcription factor aptf-4 (486 aa).

2 disordered regions span residues 25–49 (CEPS…SAKM) and 150–173 (LSTT…NQEK). Positions 150-169 (LSTTSANFTPDWNTTTNGPC) are enriched in polar residues. The interval 301-430 (QRQRKVTCFS…IVEQAALYCE (130 aa)) is H-S-H (helix-span-helix), dimerization.

It belongs to the AP-2 family. As to quaternary structure, binds DNA as a dimer.

The protein localises to the nucleus. In terms of biological role, sequence-specific DNA-binding protein that interacts with enhancer elements to regulate transcription of selected genes. Required for neuroblast and epidermal morphogenesis, perhaps acting in cooperation with transcription factor aptf-2. The sequence is that of Transcription factor aptf-4 from Caenorhabditis elegans.